The primary structure comprises 552 residues: MKALFRACRIGKVMLRYRLDTLLDGTAAERWLRLAKPFVPRISAEIVEQSRGRRLRLALQELGPIFVKFGQILSTRRDLVPQDIGDELVMLQDRVEPFEGQTARIIIETALGKSVESAFAHFDTVPLASASISQVHAATLHDGREVVVKVLRPDIEHQISDDIALLKSLATLVEHTHPNADKIRPCEIVAEIETTLAAELDLQREGANASVLRRFWEASDDIYVPEVIWSHTAEQVLTLERMYGIPSDDIALLDASGIDRKALSSKGIRVFYTQVFRDNFFHADAHSGNIWVDSDPARKSNPRFIALDFGIMGQLSQKDQYYLAENFMAIFHKDYRRIAELHVEAGWIPPHVRIEELEAAARSVCEPYFTRPLSQISLAEVLMKLFHVARRYQLTLQPQLILLQKTLLNIEGVGRQLDPELDIWVVARPVLERILRARYSPRHALKELNKRLPEIMTHAPDTPRLIHTWLVQQVESRKQNDVYLQQIRALAMTLQGLQRRVVNAIVGSGLLVAAAVLYGLHPDGLYLGAIPVWSLISGCVGALALFSAWWRS.

One can recognise a Protein kinase domain in the interval His121 to Ala504. ATP is bound by residues Leu127–Val135 and Lys149. The Proton acceptor role is filled by Asp284. 2 helical membrane-spanning segments follow: residues Val501–His521 and Tyr526–Phe546.

This sequence belongs to the ABC1 family. UbiB subfamily.

Its subcellular location is the cell inner membrane. It participates in cofactor biosynthesis; ubiquinone biosynthesis [regulation]. Its function is as follows. Is probably a protein kinase regulator of UbiI activity which is involved in aerobic coenzyme Q (ubiquinone) biosynthesis. The polypeptide is Probable protein kinase UbiB (Xylella fastidiosa (strain 9a5c)).